Reading from the N-terminus, the 339-residue chain is 4-hydroxy-2-oxovalerate aldolase 3 (339 aa).

The Pyruvate carboxyltransferase domain occupies 7–259; sequence IRVTDTSLRD…KTGIDFFAIA (253 aa). Residue 15–16 participates in substrate binding; that stretch reads RD. Residue D16 participates in Mn(2+) binding. Residue H19 is the Proton acceptor of the active site. Substrate is bound by residues S169 and H198. Mn(2+) is bound by residues H198 and H200. Y289 is a substrate binding site.

Belongs to the 4-hydroxy-2-oxovalerate aldolase family.

The catalysed reaction is (S)-4-hydroxy-2-oxopentanoate = acetaldehyde + pyruvate. The polypeptide is 4-hydroxy-2-oxovalerate aldolase 3 (hsaF) (Rhodococcus jostii (strain RHA1)).